A 99-amino-acid polypeptide reads, in one-letter code: Aspartyl/glutamyl-tRNA(Asn/Gln) amidotransferase subunit C (99 aa).

It belongs to the GatC family. In terms of assembly, heterotrimer of A, B and C subunits.

The enzyme catalyses L-glutamyl-tRNA(Gln) + L-glutamine + ATP + H2O = L-glutaminyl-tRNA(Gln) + L-glutamate + ADP + phosphate + H(+). It catalyses the reaction L-aspartyl-tRNA(Asn) + L-glutamine + ATP + H2O = L-asparaginyl-tRNA(Asn) + L-glutamate + ADP + phosphate + 2 H(+). In terms of biological role, allows the formation of correctly charged Asn-tRNA(Asn) or Gln-tRNA(Gln) through the transamidation of misacylated Asp-tRNA(Asn) or Glu-tRNA(Gln) in organisms which lack either or both of asparaginyl-tRNA or glutaminyl-tRNA synthetases. The reaction takes place in the presence of glutamine and ATP through an activated phospho-Asp-tRNA(Asn) or phospho-Glu-tRNA(Gln). The chain is Aspartyl/glutamyl-tRNA(Asn/Gln) amidotransferase subunit C from Methylibium petroleiphilum (strain ATCC BAA-1232 / LMG 22953 / PM1).